A 169-amino-acid polypeptide reads, in one-letter code: Peptide deformylase 1 (169 aa).

Cys-92 and His-134 together coordinate Fe cation. Residue Glu-135 is part of the active site. His-138 serves as a coordination point for Fe cation.

The protein belongs to the polypeptide deformylase family. Requires Fe(2+) as cofactor.

It catalyses the reaction N-terminal N-formyl-L-methionyl-[peptide] + H2O = N-terminal L-methionyl-[peptide] + formate. Removes the formyl group from the N-terminal Met of newly synthesized proteins. Requires at least a dipeptide for an efficient rate of reaction. N-terminal L-methionine is a prerequisite for activity but the enzyme has broad specificity at other positions. The protein is Peptide deformylase 1 of Ralstonia nicotianae (strain ATCC BAA-1114 / GMI1000) (Ralstonia solanacearum).